Reading from the N-terminus, the 115-residue chain is Large ribosomal subunit protein uL23 (115 aa).

Belongs to the universal ribosomal protein uL23 family. As to quaternary structure, part of the 50S ribosomal subunit. Contacts protein L29, and trigger factor when it is bound to the ribosome.

In terms of biological role, one of the early assembly proteins it binds 23S rRNA. One of the proteins that surrounds the polypeptide exit tunnel on the outside of the ribosome. Forms the main docking site for trigger factor binding to the ribosome. The protein is Large ribosomal subunit protein uL23 of Granulibacter bethesdensis (strain ATCC BAA-1260 / CGDNIH1).